The following is a 275-amino-acid chain: Putative Ig-like V-type domain-containing protein FPV055 (275 aa).

Ig-like V-type domains lie at 25–122 (KTFV…MNLG) and 140–239 (PRRS…KSLS).

The polypeptide is Putative Ig-like V-type domain-containing protein FPV055 (Fowlpox virus (strain NVSL) (FPV)).